The following is a 220-amino-acid chain: Metalloproteinase inhibitor 2 (220 aa).

Residues M1–A26 form the signal peptide. Residue C27 coordinates Zn(2+). Positions C27–S30 are involved in metalloproteinase-binding. 6 disulfide bridges follow: C27-C98, C29-C127, C39-C152, C154-C201, C159-C164, and C172-C193. The NTR domain maps to C27 to C152.

It belongs to the protease inhibitor I35 (TIMP) family. As to quaternary structure, interacts (via the C-terminal) with MMP2 (via the C-terminal PEX domain); the interaction inhibits the MMP2 activity. In terms of processing, the activity of TIMP2 is dependent on the presence of disulfide bonds.

The protein resides in the secreted. Functionally, complexes with metalloproteinases (such as collagenases) and irreversibly inactivates them by binding to their catalytic zinc cofactor. The sequence is that of Metalloproteinase inhibitor 2 (TIMP2) from Bos taurus (Bovine).